The sequence spans 111 residues: Small ribosomal subunit protein bS16 (111 aa).

The disordered stretch occupies residues 92–111 (MEVKAKNRKARPSKKEDKEA).

It belongs to the bacterial ribosomal protein bS16 family.

This chain is Small ribosomal subunit protein bS16, found in Rickettsia massiliae (strain Mtu5).